The following is a 287-amino-acid chain: Nucleotide-binding protein Gbem_0872 (287 aa).

Gly-8 to Ser-15 contributes to the ATP binding site. Asp-59 to Ser-62 provides a ligand contact to GTP.

It belongs to the RapZ-like family.

In terms of biological role, displays ATPase and GTPase activities. The protein is Nucleotide-binding protein Gbem_0872 of Citrifermentans bemidjiense (strain ATCC BAA-1014 / DSM 16622 / JCM 12645 / Bem) (Geobacter bemidjiensis).